Consider the following 342-residue polypeptide: Pre-mRNA-splicing factor 18 (342 aa).

Belongs to the PRP18 family. In terms of assembly, interacts with the spliceosome. Part of a complex containing U4/U6 snRNPs.

It localises to the nucleus speckle. In terms of biological role, participates in the second step of pre-mRNA splicing. This Xenopus laevis (African clawed frog) protein is Pre-mRNA-splicing factor 18 (prpf18).